The primary structure comprises 264 residues: 3'-5' ssDNA/RNA exonuclease TatD (264 aa).

The a divalent metal cation site is built by Glu92, His128, and His153.

Belongs to the metallo-dependent hydrolases superfamily. TatD-type hydrolase family. TatD subfamily. In terms of assembly, monomer. It depends on Mg(2+) as a cofactor.

It localises to the cytoplasm. 3'-5' exonuclease that prefers single-stranded DNA and RNA. May play a role in the H(2)O(2)-induced DNA damage repair. This chain is 3'-5' ssDNA/RNA exonuclease TatD, found in Musicola paradisiaca (strain Ech703) (Dickeya paradisiaca).